A 559-amino-acid polypeptide reads, in one-letter code: Potassium-transporting ATPase potassium-binding subunit (559 aa).

13 helical membrane passes run 5–25 (GFLL…PLGS), 27–47 (LARL…RILW), 63–83 (LLAL…LLFW), 132–152 (GLTV…FALI), 170–190 (LVRI…LFFI), 253–273 (LAQM…FGEA), 283–303 (LLWA…WAEV), 327–347 (FGVL…CGAV), 356–376 (ALGG…FGGV), 379–399 (GLYG…LMIG), 416–436 (MTAL…ALAM), 484–504 (LLAF…MAIA), and 524–544 (GALF…LTFI).

Belongs to the KdpA family. As to quaternary structure, the system is composed of three essential subunits: KdpA, KdpB and KdpC.

It localises to the cell inner membrane. Part of the high-affinity ATP-driven potassium transport (or Kdp) system, which catalyzes the hydrolysis of ATP coupled with the electrogenic transport of potassium into the cytoplasm. This subunit binds the periplasmic potassium ions and delivers the ions to the membrane domain of KdpB through an intramembrane tunnel. The protein is Potassium-transporting ATPase potassium-binding subunit of Salmonella typhi.